The following is a 133-amino-acid chain: Ribonuclease P protein component (133 aa).

The interval 114–133 (RSRPTPEEKSEPAGVDSTDA) is disordered.

This sequence belongs to the RnpA family. Consists of a catalytic RNA component (M1 or rnpB) and a protein subunit.

The catalysed reaction is Endonucleolytic cleavage of RNA, removing 5'-extranucleotides from tRNA precursor.. Functionally, RNaseP catalyzes the removal of the 5'-leader sequence from pre-tRNA to produce the mature 5'-terminus. It can also cleave other RNA substrates such as 4.5S RNA. The protein component plays an auxiliary but essential role in vivo by binding to the 5'-leader sequence and broadening the substrate specificity of the ribozyme. The chain is Ribonuclease P protein component from Pseudomonas syringae pv. tomato (strain ATCC BAA-871 / DC3000).